A 137-amino-acid polypeptide reads, in one-letter code: Putative nickel-responsive regulator (137 aa).

Residues His-78, His-89, His-91, and Cys-97 each coordinate Ni(2+).

Belongs to the transcriptional regulatory CopG/NikR family. It depends on Ni(2+) as a cofactor.

Functionally, transcriptional regulator. This Syntrophus aciditrophicus (strain SB) protein is Putative nickel-responsive regulator.